A 163-amino-acid chain; its full sequence is MSEQGRETEEEEGGGGASDTAPMLPRGPPDHQASALTCPGWSGPPLLPGRLLAGLLLHLLLPAAAFLLVLLPAAAVVYLGFLCHSRVHPAPGPRCRALFSDRGSAALIVFGLLSLPPLLVLASAVRARLARRLRPLLPPPAGTPGPRRPPGRPDEDEQLCAWV.

Positions 1–37 are disordered; the sequence is MSEQGRETEEEEGGGGASDTAPMLPRGPPDHQASALT. 2 consecutive transmembrane segments (helical) span residues 51 to 71 and 105 to 125; these read LLAGLLLHLLLPAAAFLLVLL and AALIVFGLLSLPPLLVLASAV. Positions 136–148 are enriched in pro residues; sequence LLPPPAGTPGPRR. The segment at 136–156 is disordered; that stretch reads LLPPPAGTPGPRRPPGRPDED.

The protein belongs to the TMEM88 family.

It localises to the membrane. This is Transmembrane protein 278 from Homo sapiens (Human).